The sequence spans 268 residues: Interleukin-1 beta (268 aa).

Residues 1 to 116 constitute a propeptide that is removed on maturation; the sequence is MATVPELTSE…TWDDYSLECD (116 aa).

The protein belongs to the IL-1 family. In terms of assembly, monomer. In its precursor form, weakly interacts with full-length MEFV; the mature cytokine does not interact at all. Interacts with integrins ITGAV:ITGBV and ITGA5:ITGB1; integrin-binding is required for IL1B signaling. Interacts with cargo receptor TMED10; the interaction is direct and is required for the secretion of IL1B mature form. Interacts with HSP90AB1; the interaction facilitates cargo translocation into the ERGIC. Interacts with HSP90B1; the interaction facilitates cargo translocation into the ERGIC.

The protein localises to the cytoplasm. It localises to the cytosol. The protein resides in the secreted. It is found in the lysosome. Its subcellular location is the extracellular exosome. Its function is as follows. Potent pro-inflammatory cytokine. Initially discovered as the major endogenous pyrogen, induces prostaglandin synthesis, neutrophil influx and activation, T-cell activation and cytokine production, B-cell activation and antibody production, and fibroblast proliferation and collagen production. Promotes Th17 differentiation of T-cells. Synergizes with IL12/interleukin-12 to induce IFNG synthesis from T-helper 1 (Th1) cells. Plays a role in angiogenesis by inducing VEGF production synergistically with TNF and IL6. Involved in transduction of inflammation downstream of pyroptosis: its mature form is specifically released in the extracellular milieu by passing through the gasdermin-D (GSDMD) pore. In Oryctolagus cuniculus (Rabbit), this protein is Interleukin-1 beta (IL1B).